A 539-amino-acid chain; its full sequence is Phosphoenolpyruvate carboxykinase (ATP) (539 aa).

3 residues coordinate substrate: Arg64, Tyr206, and Lys212. Residues Lys212, His231, and Gly247–Thr255 contribute to the ATP site. Residues Lys212 and His231 each coordinate Mn(2+). Mn(2+) is bound at residue Asp268. ATP-binding positions include Glu296, Arg332, Arg448 to Ile449, and Thr454. Arg332 provides a ligand contact to substrate.

The protein belongs to the phosphoenolpyruvate carboxykinase (ATP) family. In terms of assembly, monomer. Mn(2+) serves as cofactor.

The protein localises to the cytoplasm. The catalysed reaction is oxaloacetate + ATP = phosphoenolpyruvate + ADP + CO2. It participates in carbohydrate biosynthesis; gluconeogenesis. In terms of biological role, involved in the gluconeogenesis. Catalyzes the conversion of oxaloacetate (OAA) to phosphoenolpyruvate (PEP) through direct phosphoryl transfer between the nucleoside triphosphate and OAA. The chain is Phosphoenolpyruvate carboxykinase (ATP) from Yersinia pseudotuberculosis serotype IB (strain PB1/+).